A 376-amino-acid chain; its full sequence is Cyclin-D3-1 (376 aa).

Positions 298 to 376 (KRKSHDSSSS…HLPWAIVATP (79 aa)) are disordered. The segment covering 321–349 (NSDESSNDSWSASSCNPPTSSSSPQQQPP) has biased composition (low complexity). Residues 354–363 (RGAEENEKKK) are compositionally biased toward basic and acidic residues.

Belongs to the cyclin family. Cyclin D subfamily. As to quaternary structure, interacts with the C-terminal domain of CDKA-1. Interacts with KRP1/ICK1. Interacts with KRP6. Post-translationally, phosphorylated. As to expression, highly expressed in roots and at lower levels in leaves and flowers. Expressed in vegetative shoot meristem and inflorescence.

Its function is as follows. Involved in the control of the cell cycle at the G1/S (start) transition. Activates the G1/S phase transition in response to cytokinin hormone signal, but declines in response to sucrose starvation leading to G1 arrest. Involved in the induction of mitotic cell division. Plays an important role in the switch from cell proliferation to the final stages of differentiation during plant development. May not be involved in the activation of cell cycle in the root apical meristem (RAM) in the early phase of seed germination. Promotes divisions in the guard cells (GCs) after the guard mother cells (GMC) symmetric division. The protein is Cyclin-D3-1 (CYCD3-1) of Arabidopsis thaliana (Mouse-ear cress).